We begin with the raw amino-acid sequence, 155 residues long: 3-hydroxyacyl-[acyl-carrier-protein] dehydratase FabZ (155 aa).

The active site involves H58.

This sequence belongs to the thioester dehydratase family. FabZ subfamily.

It localises to the cytoplasm. It carries out the reaction a (3R)-hydroxyacyl-[ACP] = a (2E)-enoyl-[ACP] + H2O. Functionally, involved in unsaturated fatty acids biosynthesis. Catalyzes the dehydration of short chain beta-hydroxyacyl-ACPs and long chain saturated and unsaturated beta-hydroxyacyl-ACPs. The protein is 3-hydroxyacyl-[acyl-carrier-protein] dehydratase FabZ of Alkalilimnicola ehrlichii (strain ATCC BAA-1101 / DSM 17681 / MLHE-1).